Consider the following 153-residue polypeptide: Endoribonuclease YbeY (153 aa).

The Zn(2+) site is built by H114, H118, and H124.

Belongs to the endoribonuclease YbeY family. It depends on Zn(2+) as a cofactor.

The protein resides in the cytoplasm. In terms of biological role, single strand-specific metallo-endoribonuclease involved in late-stage 70S ribosome quality control and in maturation of the 3' terminus of the 16S rRNA. The protein is Endoribonuclease YbeY of Shewanella amazonensis (strain ATCC BAA-1098 / SB2B).